A 352-amino-acid polypeptide reads, in one-letter code: Rhodopsin (352 aa).

Residues Met-1 to Ala-36 are Extracellular-facing. Residues Asn-2 and Asn-15 are each glycosylated (N-linked (GlcNAc...) asparagine). The helical transmembrane segment at Tyr-37–Val-61 threads the bilayer. Residues Thr-62 to Asn-73 lie on the Cytoplasmic side of the membrane. Residues Tyr-74 to Tyr-96 traverse the membrane as a helical segment. At Thr-97–Cys-110 the chain is on the extracellular side. A disulfide bridge links Cys-110 with Cys-187. Residues Asn-111 to Ile-133 form a helical membrane-spanning segment. Positions Glu-134–Trp-136 match the 'Ionic lock' involved in activated form stabilization motif. Residues Glu-134 to His-152 lie on the Cytoplasmic side of the membrane. A helical membrane pass occupies residues Ala-153 to Val-173. At Gly-174–Ser-202 the chain is on the extracellular side. A helical transmembrane segment spans residues Phe-203–Gly-224. Topologically, residues Arg-225–Arg-252 are cytoplasmic. The helical transmembrane segment at Met-253–Trp-274 threads the bilayer. At Ile-275–Ile-286 the chain is on the extracellular side. Residues Phe-287–Cys-308 traverse the membrane as a helical segment. An N6-(retinylidene)lysine modification is found at Lys-296. The Cytoplasmic segment spans residues Leu-309 to Ala-352. Residues Cys-322 and Cys-323 are each lipidated (S-palmitoyl cysteine). The disordered stretch occupies residues Glu-331 to Ala-352. Residues Ala-334–Ala-352 are compositionally biased toward low complexity.

This sequence belongs to the G-protein coupled receptor 1 family. Opsin subfamily. Post-translationally, phosphorylated on some or all of the serine and threonine residues present in the C-terminal region. Contains one covalently linked retinal chromophore.

The protein resides in the membrane. It localises to the cell projection. The protein localises to the cilium. Its subcellular location is the photoreceptor outer segment. In terms of biological role, photoreceptor required for image-forming vision at low light intensity. While most salt water fish species use retinal as chromophore, most freshwater fish use 3-dehydroretinal, or a mixture of retinal and 3-dehydroretinal. Light-induced isomerization of 11-cis to all-trans retinal triggers a conformational change that activates signaling via G-proteins. Subsequent receptor phosphorylation mediates displacement of the bound G-protein alpha subunit by arrestin and terminates signaling. This Psalidodon fasciatus (Banded astyanax) protein is Rhodopsin (rho).